The primary structure comprises 804 residues: Putative mRNA-capping enzyme P5 (804 aa).

This sequence belongs to the phytoreovirus protein P5 family.

The protein localises to the virion. It is found in the host cytoplasm. It catalyses the reaction a 5'-end diphospho-ribonucleoside in mRNA + GTP + H(+) = a 5'-end (5'-triphosphoguanosine)-ribonucleoside in mRNA + diphosphate. Its pathway is mRNA processing; mRNA capping. Enzyme involved in mRNA capping (Potential). Binds to GTP and might have guanylyltransferase activity. Together with the RNA-directed RNA polymerase P1 and protein P7, forms an transcriptional complex positioned near the channels situated at each of the five-fold vertices of the core. This chain is Putative mRNA-capping enzyme P5, found in Catharanthus roseus (Madagascar periwinkle).